The primary structure comprises 234 residues: Sperm-associated microtubule inner protein 5 (234 aa).

In terms of assembly, microtubule inner protein component of sperm flagellar doublet microtubules. Expressed in testis (at protein level). Strongly expressed in peritubular cells and Leydig cells and weakly expressed in the cytoplasm of spermatocytes.

The protein resides in the cytoplasm. It localises to the cytoskeleton. The protein localises to the flagellum axoneme. It is found in the nucleus. Its function is as follows. Microtubule inner protein (MIP) part of the dynein-decorated doublet microtubules (DMTs) in flagellum axoneme. May serve to reinforce and thus stabilize the microtubule structure in the sperm flagella. The chain is Sperm-associated microtubule inner protein 5 from Homo sapiens (Human).